A 162-amino-acid polypeptide reads, in one-letter code: Disulfide bond formation protein B (162 aa).

At 1–8 the chain is on the cytoplasmic side; it reads MTPLFRKA. A helical transmembrane segment spans residues 9–25; the sequence is VWLLFAVSVCAFAGSLA. Topologically, residues 26-43 are periplasmic; that stretch reads AQYVLGMEPCVLCISQRL. Cysteine 35 and cysteine 38 form a disulfide bridge. A helical transmembrane segment spans residues 44-60; that stretch reads CVLATALCAAVVLACKP. Over 61-67 the chain is Cytoplasmic; the sequence is KGRVGGL. The helical transmembrane segment at 68-85 threads the bilayer; the sequence is SGAVFISIPAVTGISVAA. Residues 86-141 lie on the Periplasmic side of the membrane; sequence YQLWLQSLPPGAAPSCGAPWTFRLKGWPLFDWFEPVVRGFGNCAEPDYLLGVALPV. Cysteines 101 and 128 form a disulfide. Residues 142–160 form a helical membrane-spanning segment; the sequence is WSAAYFLAVVLTVWWAWAR. Residues 161-162 are Cytoplasmic-facing; that stretch reads AK.

Belongs to the DsbB family.

The protein localises to the cell inner membrane. In terms of biological role, required for disulfide bond formation in some periplasmic proteins. Acts by oxidizing the DsbA protein. This is Disulfide bond formation protein B from Neisseria gonorrhoeae (strain ATCC 700825 / FA 1090).